The following is a 271-amino-acid chain: Thiamine thiazole synthase (271 aa).

NAD(+) is bound by residues serine 39, 58-59 (ER), glycine 66, valine 130, and 158-160 (HVD). Fe cation-binding residues include aspartate 160 and histidine 175. An NAD(+)-binding site is contributed by methionine 225. Residue arginine 235 participates in glycine binding.

This sequence belongs to the THI4 family. As to quaternary structure, homooctamer; tetramer of dimers. Fe(2+) serves as cofactor.

It carries out the reaction hydrogen sulfide + glycine + NAD(+) = ADP-5-ethyl-4-methylthiazole-2-carboxylate + nicotinamide + 3 H2O + H(+). The protein operates within cofactor biosynthesis; thiamine diphosphate biosynthesis. Functionally, involved in the biosynthesis of the thiazole moiety of thiamine. Catalyzes the conversion of NAD and glycine to adenosine diphosphate 5-(2-hydroxyethyl)-4-methylthiazole-2-carboxylate (ADT), an adenylated thiazole intermediate, using free sulfide as a source of sulfur. The chain is Thiamine thiazole synthase from Metallosphaera sedula (strain ATCC 51363 / DSM 5348 / JCM 9185 / NBRC 15509 / TH2).